The primary structure comprises 466 residues: Cysteine--tRNA ligase (466 aa).

Zn(2+) is bound at residue C28. The 'HIGH' region motif lies at P30 to N40. The Zn(2+) site is built by C208, H233, and E237. The 'KMSKS' region motif lies at K265–S269. Residue K268 coordinates ATP.

Belongs to the class-I aminoacyl-tRNA synthetase family. In terms of assembly, monomer. Zn(2+) serves as cofactor.

Its subcellular location is the cytoplasm. The catalysed reaction is tRNA(Cys) + L-cysteine + ATP = L-cysteinyl-tRNA(Cys) + AMP + diphosphate. The sequence is that of Cysteine--tRNA ligase from Staphylococcus saprophyticus subsp. saprophyticus (strain ATCC 15305 / DSM 20229 / NCIMB 8711 / NCTC 7292 / S-41).